The sequence spans 680 residues: tRNA 5-methylaminomethyl-2-thiouridine biosynthesis bifunctional protein MnmC (680 aa).

The tRNA (mnm(5)s(2)U34)-methyltransferase stretch occupies residues 1-251 (MSQNHILPQN…KREMIAGTLT (251 aa)). The FAD-dependent cmnm(5)s(2)U34 oxidoreductase stretch occupies residues 277-680 (IGGGVASAAL…RLLKGKPLDI (404 aa)).

In the N-terminal section; belongs to the methyltransferase superfamily. tRNA (mnm(5)s(2)U34)-methyltransferase family. It in the C-terminal section; belongs to the DAO family. It depends on FAD as a cofactor.

Its subcellular location is the cytoplasm. The catalysed reaction is 5-aminomethyl-2-thiouridine(34) in tRNA + S-adenosyl-L-methionine = 5-methylaminomethyl-2-thiouridine(34) in tRNA + S-adenosyl-L-homocysteine + H(+). Functionally, catalyzes the last two steps in the biosynthesis of 5-methylaminomethyl-2-thiouridine (mnm(5)s(2)U) at the wobble position (U34) in tRNA. Catalyzes the FAD-dependent demodification of cmnm(5)s(2)U34 to nm(5)s(2)U34, followed by the transfer of a methyl group from S-adenosyl-L-methionine to nm(5)s(2)U34, to form mnm(5)s(2)U34. This Aliivibrio fischeri (strain ATCC 700601 / ES114) (Vibrio fischeri) protein is tRNA 5-methylaminomethyl-2-thiouridine biosynthesis bifunctional protein MnmC.